The primary structure comprises 229 residues: Transmembrane emp24 domain-containing protein 5 (229 aa).

A signal peptide spans 1–27 (MGDKIWLPFPVLLLAALPPVLLPGAAG). The Lumenal portion of the chain corresponds to 28 to 196 (FTPSLDSDFT…IQESNFDRVN (169 aa)). The GOLD domain occupies 45 to 126 (RECFYQPMPL…EKVIFFELIL (82 aa)). A helical membrane pass occupies residues 197–217 (FWSMVNLVVMVVVSAIQVYML). Over 218–229 (KSLFEDKRKSRT) the chain is Cytoplasmic.

The protein belongs to the EMP24/GP25L family. As to quaternary structure, interacts with TMED9 and TMED10.

The protein localises to the endoplasmic reticulum membrane. The protein resides in the golgi apparatus. Its subcellular location is the cis-Golgi network membrane. It localises to the endoplasmic reticulum-Golgi intermediate compartment membrane. Its function is as follows. Potential role in vesicular protein trafficking, mainly in the early secretory pathway. Required for the maintenance of the Golgi apparatus; involved in protein exchange between Golgi stacks during assembly. Probably not required for COPI-vesicle-mediated retrograde transport. The protein is Transmembrane emp24 domain-containing protein 5 (TMED5) of Pongo abelii (Sumatran orangutan).